The sequence spans 311 residues: MVSTKTQIAGFEFDNCLMNAAGVACMTIEELEEVKNSAAGTFVTKTATLDFRQGNPEPRYQDVPLGSINSMGLPNNGLDYYLDYLLDLQEKESNRTFFLSLVGMSPEETHTILKKVQESDFRGLTELNLSCPNVPGKPQIAYDFETTDRILAEVFAYFTKPLGIKLPPYFDIVHFDQAAAIFNKYPLKFVNCVNSIGNGLYIEDESVVIRPKNGFGGIGGEYIKPTALANVHAFYQRLNPQIQIIGTGGVLTGRDAFEHILCGASMVQVGTTLHKEGVSAFDRITNELKAIMVEKGYESLEDFRGKLRYID.

Residues Lys-45, 69–73 (NSMGL), and Asn-128 contribute to the substrate site. An FMN-binding site is contributed by 45–46 (KT). Asn-128 contributes to the FMN binding site. Cys-131 acts as the Nucleophile in catalysis. Positions 165 and 193 each coordinate FMN. Substrate is bound at residue 194–195 (NS). FMN contacts are provided by residues Gly-220, 248–249 (GG), and 270–271 (GT).

Belongs to the dihydroorotate dehydrogenase family. Type 1 subfamily. In terms of assembly, homodimer. FMN serves as cofactor.

The protein resides in the cytoplasm. The enzyme catalyses (S)-dihydroorotate + fumarate = orotate + succinate. The protein operates within pyrimidine metabolism; UMP biosynthesis via de novo pathway. Functionally, catalyzes the conversion of dihydroorotate to orotate with fumarate as the electron acceptor. This is Probable dihydroorotate dehydrogenase A (fumarate) (pyrDA) from Streptococcus pneumoniae serotype 4 (strain ATCC BAA-334 / TIGR4).